The following is a 1210-amino-acid chain: MLGLKFLVLLSILWGRVFRLTNTQHSWTAPKDEDASLTPNHASASVSEILSLQVLSATQNPSTQGPAAAERSSEDDVLLQSTSQPSETSTPPEGRHQTPLEKTGTAVVSLPLSLQDKPSIKPSTGAGTVMLANATLKFLQSFSRKSDQQEVSTKSAGDMGNRSARETHLRRSDNSRNQRPSYQKPSFETTRGKNWCAHVHTKLSPTVILDTGSHLPSGRGSCGWYSSGLCSRRSQKTSNAVYRMQHKIVTSLEWRCCPGYIGPNCQLKVEEQQQLAHSNQAESHTAVDQGRAQQQKQDCGDPAMIQKLAEQLSQQERKLSLLQKKVDNASLVADDMRNAYLSLEGKVGEDNSRQFQSFLKALKSKSIEDLLKNIVKEQFKVFQDDMQETTAQIFKTVSSLSEDLESTRQAVLQVNQSFVSSTAQKDFAFMQENQPTWKDITDLKNSIMNIRQEMALTCEKPVKELEAKQAHLEGALRQEHSQIVLYHQSLNETLSKMQEAHIQLLSVLQVSGTENVATEESLNSNVTKYISVLQETASKQGLMLLQMLSDLHVQESKISNLTILLEMEKESARGECEEMLSKCRHDFKFQLKDTEENLHVLNQTLSEVIFPMDIKVDKMSEQLNDLTYDMEILQPLLEQRSSLQHQVIHKPKEATVTRRELQNLIGAINQLNVLTKELTKRHNLLRNEVQSRGEAFERRISEHALETEDGLNKTMTVINNAIDFVQDNYVLKETLSAMTYNPKVCECNQNMDNILTFVSEFQHLNDSIQTLVNNKEKYNFILQIAKALTAIPKDEKLNQLNFQNIYQLFNETTSQVNKCQQNMSHLEENMLSVTKTAKEFETRLQGIESKVTKTLIPYYISFKKGGILSNERDVDLQLKVLNTRFKALEAKSIHLSVSFSLLNKTVRELSMACRNASTGTCGQNALIPRWTKGSLPGSQSSQKSLTELVESIVEIKTQAALSNLTWNVDRLLSDTLANIVKPQKQIKLQKKPNTLKKTVNMTTILIGRTQRNTDTIIHPVAQEHSSCSSFPCQNGGTCISGRSNFICACRHPFMGDTCTVKIKEDDAVAPDFSKGSYRYAPMVAFFVSHTHGMTAPGPILFNDLSVNYGASYNPRTGKFRIPYLGVYIFKYTIESFSAHISGFFVVDGVDKLRFESENADNEIHCDRVLTGDALFELNYGQEVWLRLVKGTIPIKYPPVTTFSGYLLYRT.

Positions 1–19 are cleaved as a signal peptide; it reads MLGLKFLVLLSILWGRVFR. The segment at 57–102 is disordered; sequence ATQNPSTQGPAAAERSSEDDVLLQSTSQPSETSTPPEGRHQTPLEK. Over residues 80–92 the composition is skewed to low complexity; that stretch reads QSTSQPSETSTPP. Asn-133 carries N-linked (GlcNAc...) asparagine glycosylation. Residues 143–155 are compositionally biased toward polar residues; sequence SRKSDQQEVSTKS. The interval 143–190 is disordered; it reads SRKSDQQEVSTKSAGDMGNRSARETHLRRSDNSRNQRPSYQKPSFETT. Asn-161 carries an N-linked (GlcNAc...) asparagine glycan. A compositionally biased stretch (basic and acidic residues) spans 163–176; the sequence is SARETHLRRSDNSR. Residues 177–189 are compositionally biased toward polar residues; it reads NQRPSYQKPSFET. The EMI domain maps to 192-267; it reads GKNWCAHVHT…PGYIGPNCQL (76 aa). 3 disulfide bridges follow: Cys-196-Cys-257, Cys-222-Cys-230, and Cys-256-Cys-265. A glycan (O-linked (Fuc) threonine) is linked at Thr-201. A glycan (O-linked (Fuc) threonine) is linked at Thr-250. The disordered stretch occupies residues 276–299; it reads AHSNQAESHTAVDQGRAQQQKQDC. A coiled-coil region spans residues 303-338; the sequence is AMIQKLAEQLSQQERKLSLLQKKVDNASLVADDMRN. Asn-328, Asn-415, Asn-491, Asn-525, Asn-560, Asn-602, Asn-712, Asn-765, Asn-810, Asn-822, Asn-903, Asn-915, Asn-963, and Asn-1000 each carry an N-linked (GlcNAc...) asparagine glycan. A coiled-coil region spans residues 564 to 690; sequence LLEMEKESAR…RHNLLRNEVQ (127 aa). Residues 809–846 adopt a coiled-coil conformation; it reads FNETTSQVNKCQQNMSHLEENMLSVTKTAKEFETRLQG. Residues 1023 to 1059 form the EGF-like domain; that stretch reads EHSSCSSFPCQNGGTCISGRSNFICACRHPFMGDTCT. Intrachain disulfides connect Cys-1027–Cys-1038, Cys-1032–Cys-1047, and Cys-1049–Cys-1058. Thr-1037 is a glycosylation site (O-linked (Fuc) threonine). In terms of domain architecture, C1q spans 1078–1210; sequence RYAPMVAFFV…TFSGYLLYRT (133 aa).

Multimeric. Composed of varying sized, disulfide-linked multimers, the smallest of which is a homotrimer. Proteolysis of the promultimerin in the N-terminal region, leads to the mature p155 form that is stored in platelets. Interacts with factor V/Va. In terms of processing, extensively N-glycosylated. Post-translationally, O-fucosylated within the EMI domain (at Thr-201 and Thr-250) by FUT10/POFUT3 and FUT11/POFUT4. O-fucosylation at Thr-201 and Thr-1037 are required for facilitating protein folding and secretion.

The protein resides in the secreted. In terms of biological role, carrier protein for platelet (but not plasma) factor V/Va. Plays a role in the storage and stabilization of factor V in platelets. Upon release following platelet activation, may limit platelet and plasma factor Va-dependent thrombin generation. Ligand for integrin alpha-IIb/beta-3 and integrin alpha-V/beta-3 on activated platelets, and may function as an extracellular matrix or adhesive protein. The sequence is that of Multimerin-1 from Mus musculus (Mouse).